The chain runs to 397 residues: ATP-dependent RNA helicase RhlB (397 aa).

A Q motif motif is present at residues 9–37; sequence TRFHDFNLAPSLMHAIHDLGFPYCTPIQA. Positions 40–220 constitute a Helicase ATP-binding domain; sequence LGFTLRGQDA…KQWTVDPAIV (181 aa). 53–60 lines the ATP pocket; it reads AQTGTGKT. Residues 166–169 carry the DEAD box motif; the sequence is DEAD. One can recognise a Helicase C-terminal domain in the interval 243-393; it reads DKYKLLYNLV…MPPAELLKPV (151 aa).

The protein belongs to the DEAD box helicase family. RhlB subfamily. In terms of assembly, component of the RNA degradosome, which is a multiprotein complex involved in RNA processing and mRNA degradation.

It localises to the cytoplasm. It carries out the reaction ATP + H2O = ADP + phosphate + H(+). In terms of biological role, DEAD-box RNA helicase involved in RNA degradation. Has RNA-dependent ATPase activity and unwinds double-stranded RNA. This Pseudomonas aeruginosa (strain UCBPP-PA14) protein is ATP-dependent RNA helicase RhlB.